Here is a 948-residue protein sequence, read N- to C-terminus: MDKSSTMLVHYDKGTPAVANEIKEALEGNDVEAKVDAMKKAIMLLLNGETIPQLFITIIRYVLPSEDHTIQKLLLLYLELIEKTDSKGKVLPEMILICQNLRNNLQHPNEYIRGVTLRFLCRMKETEIVEPLTPSVLQNLEHRHPFVRRNAILAIMSIYKLPQGDQLFVDAPEMIEKVLSTEQDPSAKRNAFLMLFTCAEERAVNYLLSNVDKVSDWNESLQMVVLELIRSVCKTKPAEKGKYIKIIISLLSATSSAVIYECAGTLVSLSSAPTAIRAAANTYCQLLLSQSDNNVKLILLDRLYELKTLHRDIMVELIIDVLRALSSPNLDIRRKTLDISLDLITHHNINEVVQMLKKEVVKTQSGELEKNGEYRQMLIQAIHACAVKFPEVASTVVHLLMDFLGDSNVASALDVVVFVREIIETNPKLRVSIITRLLDTFYQIRAGKVCPCALWIIGEYCLSLSEVESGISTITQCLGELPFYSVSEESEPTETSKKIQPTSSAMVSSRKPVILADGTYATQSAASETTFSSPTVVQGSLTSGNLRALLLTGDFFLGAVVACTLTKLVLRLEEVQSSKTEVNKTVTQALLIMVSMLQLGQSPVSPHPIDNDSYERIVLCIKLLCHRNDEMKKIWLESCRQSFVKMISEKQLREMEELKAKTQTTHAQPDDLIDFFHLKSRKGMSQLELEDQVQDDLKRATGEFTKDENDANKLNRILQLTGFSDPVYAEAYVTVHHYDIALEVTVINRTKETLQNLCLELATMGDLKLVERPQNYSLAPERSMQIKANIKVSSTETGVIFGNIVYETSNVMERNVVVLNDIHIDIMDYISPAVCSEVAFRTMWAEFEWENKVAVNTTIQNEREFLDHIIKSTNMKCLTAPSAIEGECGFLAANLYAKSVFGEDALVNVSIEKQTDGALSGYIRIRSKTQGIALSLGDKITLKQKGSS.

HEAT repeat units lie at residues 49 to 87 (ETIP…TDSK), 92 to 126 (PEMI…MKET), 127 to 164 (EIVE…LPQG), 274 to 311 (TAIR…TLHR), 312 to 349 (DIMV…HHNI), and 391 to 428 (EVAS…TNPK).

As to quaternary structure, oligomeric complex that consists of at least the alpha, beta, beta', gamma, delta, epsilon and zeta subunits.

Its subcellular location is the cytoplasm. It is found in the golgi apparatus membrane. The protein localises to the cytoplasmic vesicle. It localises to the COPI-coated vesicle membrane. Its function is as follows. The coatomer is a cytosolic protein complex that binds to dilysine motifs and reversibly associates with Golgi non-clathrin-coated vesicles, which further mediate biosynthetic protein transport from the ER, via the Golgi up to the trans Golgi network. Coatomer complex is required for budding from Golgi membranes, and is essential for the retrograde Golgi-to-ER transport of dilysine-tagged proteins. The chain is Coatomer subunit beta-1 from Arabidopsis thaliana (Mouse-ear cress).